Reading from the N-terminus, the 134-residue chain is Small ribosomal subunit protein uS8c (134 aa).

In terms of assembly, component of the chloroplast small ribosomal subunit (SSU). Mature 70S chloroplast ribosomes of higher plants consist of a small (30S) and a large (50S) subunit. The 30S small subunit contains 1 molecule of ribosomal RNA (16S rRNA) and 24 different proteins. The 50S large subunit contains 3 rRNA molecules (23S, 5S and 4.5S rRNA) and 33 different proteins.

The protein resides in the plastid. It is found in the chloroplast. Its function is as follows. Component of the chloroplast ribosome (chloro-ribosome), a dedicated translation machinery responsible for the synthesis of chloroplast genome-encoded proteins, including proteins of the transcription and translation machinery and components of the photosynthetic apparatus. This Spinacia oleracea (Spinach) protein is Small ribosomal subunit protein uS8c (rps8).